Consider the following 238-residue polypeptide: Pyridoxine 5'-phosphate synthase (238 aa).

Asparagine 9 contributes to the 3-amino-2-oxopropyl phosphate binding site. 11 to 12 (DH) is a 1-deoxy-D-xylulose 5-phosphate binding site. Residue arginine 20 coordinates 3-amino-2-oxopropyl phosphate. Histidine 45 functions as the Proton acceptor in the catalytic mechanism. Residues arginine 47 and histidine 52 each contribute to the 1-deoxy-D-xylulose 5-phosphate site. Catalysis depends on glutamate 72, which acts as the Proton acceptor. Threonine 102 is a 1-deoxy-D-xylulose 5-phosphate binding site. Histidine 189 (proton donor) is an active-site residue. 3-amino-2-oxopropyl phosphate-binding positions include glycine 190 and 211 to 212 (GH).

The protein belongs to the PNP synthase family. As to quaternary structure, homooctamer; tetramer of dimers.

It localises to the cytoplasm. The enzyme catalyses 3-amino-2-oxopropyl phosphate + 1-deoxy-D-xylulose 5-phosphate = pyridoxine 5'-phosphate + phosphate + 2 H2O + H(+). The protein operates within cofactor biosynthesis; pyridoxine 5'-phosphate biosynthesis; pyridoxine 5'-phosphate from D-erythrose 4-phosphate: step 5/5. Its function is as follows. Catalyzes the complicated ring closure reaction between the two acyclic compounds 1-deoxy-D-xylulose-5-phosphate (DXP) and 3-amino-2-oxopropyl phosphate (1-amino-acetone-3-phosphate or AAP) to form pyridoxine 5'-phosphate (PNP) and inorganic phosphate. This chain is Pyridoxine 5'-phosphate synthase, found in Ehrlichia ruminantium (strain Gardel).